The primary structure comprises 553 residues: Arginine--tRNA ligase (553 aa).

Positions 132-140 match the 'HIGH' region motif; the sequence is PTGDLHIGH.

Belongs to the class-I aminoacyl-tRNA synthetase family. As to quaternary structure, monomer.

The protein resides in the cytoplasm. The catalysed reaction is tRNA(Arg) + L-arginine + ATP = L-arginyl-tRNA(Arg) + AMP + diphosphate. The protein is Arginine--tRNA ligase of Staphylococcus aureus (strain N315).